We begin with the raw amino-acid sequence, 1310 residues long: Rho family-interacting cell polarization regulator 2 (1310 aa).

2 positions are modified to phosphoserine: serine 123 and serine 178. An involved in cell filopodia formation region spans residues 196-254 (MHNLGHKNTNTPKEPQPKRVEEVYRALKNGLDEYLEFHQTELDKLTAQLKDMKRNSRLG). Residues 224–253 (NGLDEYLEFHQTELDKLTAQLKDMKRNSRL) are a coiled coil. Serine 508 carries the post-translational modification Phosphoserine. Polar residues predominate over residues 588–608 (SSLSSQNEGTEDSSSASSRNS). The tract at residues 588 to 639 (SSLSSQNEGTEDSSSASSRNSLGEDHEPKSHSKSDTVEPKKPSVDARSGTES) is disordered. Positions 609 to 631 (LGEDHEPKSHSKSDTVEPKKPSV) are enriched in basic and acidic residues. The residue at position 682 (serine 682) is a Phosphoserine.

Belongs to the RIPOR family. As to quaternary structure, homooligomer; homooligomerization is regulated by RHOC and leads to the formation of concatemers through the association of N- and C-termini. Interacts (phosphorylated form) with 14-3-3 proteins; these interactions occur during myogenic cell differentiation and also induces T cell proliferation arrest. Interacts (phosphorylated form) with HDAC6; this interaction occurs during early myogenic differentiation, prevents HDAC6 to deacetylate tubulin and also induces T cell proliferation arrest. Interacts with DYSF; this interaction occurs during early myogenic differentiation. Interacts with MYOF. Interacts (via active GTP- or inactive GDP-bound forms) with RHOA; this interaction is direct, blocks the loading of GTP to RHOA and decreases upon chemokine CCL19 stimulation in primary T lymphocytes. Interacts with RHOC. Interacts (via phosphorylated form) with YWHAB; this interaction occurs in a chemokine-dependent manner and does not compete for binding of RIPOR2 with RHOA nor blocks inhibition of RIPOR2-mediated RHOA activity. Interacts with YWHAE. Interacts with YWHAQ. In terms of processing, phosphorylated. Chemokine-induced phosphorylation in neutrophils occurs in a PKC- and AKT-dependent manner, resulting in RIPOR2 interaction with YWHAB and stabilization. Phosphorylated by PKCA, AKT1 and MAPKAPK1A; in vitro. As to expression, expressed in the cochlea (at protein level).

Its subcellular location is the cytoplasm. The protein localises to the cytoskeleton. It localises to the cell projection. It is found in the filopodium. The protein resides in the apical cell membrane. Its subcellular location is the stereocilium. The protein localises to the stereocilium membrane. In terms of biological role, acts as an inhibitor of the small GTPase RHOA and plays several roles in the regulation of myoblast and hair cell differentiation, lymphocyte T proliferation and neutrophil polarization. Plays a role in fetal mononuclear myoblast differentiation by promoting filopodia and myotube formation. Maintains naive T lymphocytes in a quiescent state and prevents chemokine-induced T lymphocyte responses, such as cell adhesion, polarization and migration. Involved also in the regulation of neutrophil polarization, chemotaxis and adhesion. Required for normal development of inner and outer hair cell stereocilia within the cochlea of the inner ear. Plays a role for maintaining the structural organization of the basal domain of stereocilia. Involved in mechanosensory hair cell function. Required for normal hearing. The polypeptide is Rho family-interacting cell polarization regulator 2 (Rattus norvegicus (Rat)).